The sequence spans 509 residues: Tyrosine-protein phosphatase non-receptor type substrate 1 (509 aa).

Residues 1–31 (MEPAGPAPGRLGPLLFCLLLSASCFCAGASG) form the signal peptide. The Ig-like V-type domain occupies 32 to 138 (KELKVTQADK…IVEPDTEIKS (107 aa)). Residues 32–373 (KELKVTQADK…PDNNAYYNWN (342 aa)) are Extracellular-facing. Asparagine 54, asparagine 93, asparagine 169, asparagine 181, asparagine 205, asparagine 209, asparagine 242, asparagine 246, asparagine 271, asparagine 293, asparagine 312, asparagine 320, and asparagine 345 each carry an N-linked (GlcNAc...) asparagine glycan. Cysteine 55 and cysteine 122 are joined by a disulfide. 2 consecutive Ig-like C1-type domains span residues 150–248 (PSSP…ANFS) and 255–349 (PTLK…HTVR). The cysteines at positions 172 and 229 are disulfide-linked. A disulfide bridge connects residues cysteine 274 and cysteine 332. A helical transmembrane segment spans residues 374-394 (VFIGVGVACALLVVLLMAALY). The Cytoplasmic portion of the chain corresponds to 395–509 (LLRIKQKKAK…EYASVQVQRK (115 aa)). At tyrosine 436 the chain carries Phosphotyrosine; by Tyr-kinases. The SH2-binding signature appears at 436–439 (YADL). The interval 441-472 (LPKEKKPAPRVPEPNNHTEYASIETGKLPRPE) is disordered. An SH3-binding motif is present at residues 446-451 (KPAPRV). Phosphotyrosine; by Tyr-kinases occurs at positions 460, 477, and 501. 3 consecutive short sequence motifs (SH2-binding) follow at residues 460-463 (YASI), 477-480 (YADL), and 501-504 (YASV). The interval 485–509 (LNRAQPTPKPEPSFSEYASVQVQRK) is disordered. The segment covering 500 to 509 (EYASVQVQRK) has biased composition (polar residues).

In terms of assembly, binds PTPN11 when tyrosine-phosphorylated, except in macrophages, where it primarily binds PTPN6. Binds GRB2 in vitro. Binds FGR. Binds JAK2 irrespective of its phosphorylation status and forms a stable complex. Binds SCAP1 and/or SCAP2. The resulting complex recruits FYB1. Binds PTK2B. Interacts with TRIM2. N-glycosylated. In terms of processing, phosphorylated on tyrosine residues in response to insulin, cell adhesion or epidermal growth factors. Dephosphorylated by PTPN11. In terms of tissue distribution, highly expressed in brain, spleen, lung, liver and kidney. Detected at lower levels in heart. Highly expressed in alveolar and peritoneal macrophages, and at lower levels in dendritic cells.

Its subcellular location is the membrane. In terms of biological role, immunoglobulin-like cell surface receptor for CD47. Acts as docking protein and induces translocation of PTPN6, PTPN11 and other binding partners from the cytosol to the plasma membrane. Supports adhesion of cerebellar neurons, neurite outgrowth and glial cell attachment. May play a key role in intracellular signaling during synaptogenesis and in synaptic function. Involved in the negative regulation of receptor tyrosine kinase-coupled cellular responses induced by cell adhesion, growth factors or insulin. Mediates negative regulation of phagocytosis, mast cell activation and dendritic cell activation. CD47 binding prevents maturation of immature dendritic cells and inhibits cytokine production by mature dendritic cells. Plays a role in antiviral immunity and limits new world arenavirus infection by decreasing virus internalization. Receptor for THBS1. Interaction with THBS1 stimulates phosphorylation of SIRPA. In response to THBS1, involved in ROS signaling in non-phagocytic cells, stimulating NADPH oxidase-derived ROS production. The polypeptide is Tyrosine-protein phosphatase non-receptor type substrate 1 (Sirpa) (Rattus norvegicus (Rat)).